Here is a 198-residue protein sequence, read N- to C-terminus: Ribonuclease HII (198 aa).

Residues 10 to 198 form the RNase H type-2 domain; that stretch reads QLVAGVDEVG…PVKRALGLAS (189 aa). A divalent metal cation is bound by residues Asp-16, Glu-17, and Asp-108.

This sequence belongs to the RNase HII family. It depends on Mn(2+) as a cofactor. Mg(2+) serves as cofactor.

It localises to the cytoplasm. The enzyme catalyses Endonucleolytic cleavage to 5'-phosphomonoester.. In terms of biological role, endonuclease that specifically degrades the RNA of RNA-DNA hybrids. This Escherichia coli O45:K1 (strain S88 / ExPEC) protein is Ribonuclease HII.